Consider the following 327-residue polypeptide: MKRVFSGVQPSGDIHIGNYLGAMRQFVALQDDYDCFFCVVDLHALTVPQDPVELKKNTIELAALYMAIGLDPKKVTLFVQSHVSAHAELAWLLQCITYFGELSRMTQFKEKSKGKESVSVGLFTYPDLMAADILLYKTHYVPVGEDQKQHLELTRDVAQRFNNRFGETFVIPEPMILKFGARIMSLTNPTKKMSKSDADPNNRVNLLDDPDTIYRKIMKAVTDSESEIRLDWEKKPGISNLLTIYSLFTGMEVDEVVNKFKGQGYGTLKKELAEVVIDKLSVIQKNYRDISEEEVLRVLKEGAERAEAVAVETLKEVKEKMGLILRD.

ATP-binding positions include 9-11 (QPS) and 17-18 (GN). A 'HIGH' region motif is present at residues 10-18 (PSGDIHIGN). Aspartate 132 contacts L-tryptophan. Residues 144 to 146 (GED), isoleucine 183, and 192 to 196 (KMSKS) contribute to the ATP site. The short motif at 192–196 (KMSKS) is the 'KMSKS' region element.

It belongs to the class-I aminoacyl-tRNA synthetase family. As to quaternary structure, homodimer.

It localises to the cytoplasm. It carries out the reaction tRNA(Trp) + L-tryptophan + ATP = L-tryptophyl-tRNA(Trp) + AMP + diphosphate + H(+). Catalyzes the attachment of tryptophan to tRNA(Trp). This is Tryptophan--tRNA ligase from Caldanaerobacter subterraneus subsp. tengcongensis (strain DSM 15242 / JCM 11007 / NBRC 100824 / MB4) (Thermoanaerobacter tengcongensis).